The following is a 443-amino-acid chain: MNNDNIAQLIADFPLIEKMVELKEVSWFNPNITSLQEGLPYVGLDNNNIQDASDRLARFAPYMVKAFPETAITNGIIESDVVEISAMKSQLEQQYEVEIQGKLLLKKDSHLPISGSIKARGGIYEVLTHAEQLAIKAEVLELSDDYSKLFTEEFKSFFSQYSIAVGSTGNLGMSIGIMSAKLGFSVSVHMSADARQWKKEKLRAHGVNVVEYNEDYSVAVEQGRQEAENDPKCFFIDDENSQTLFLGYSVAGERLKQQFDAMHIVVDENNPLFVYLPCGVGGGPGGVAFGLKMAFGDNVHCIFAEPTHSPCMLLGILTGLHDGIAVQDIGIDNITAADGLAVGRASGFVGRAMERLLDGFYTISDQRMYDLLGLLNKVEGIQLEPSALAGMLGPIVVTNNDEYLKRINMSNEKLVNATHLIWATGGGMVPAIEMEKYLSKAGS.

K118 is modified (N6-(pyridoxal phosphate)lysine).

Belongs to the serine/threonine dehydratase family. DsdA subfamily. Pyridoxal 5'-phosphate serves as cofactor.

The enzyme catalyses D-serine = pyruvate + NH4(+). In Colwellia psychrerythraea (strain 34H / ATCC BAA-681) (Vibrio psychroerythus), this protein is Probable D-serine dehydratase.